The following is a 277-amino-acid chain: 3-methyl-2-oxobutanoate hydroxymethyltransferase (277 aa).

D49 and D88 together coordinate Mg(2+). 3-methyl-2-oxobutanoate-binding positions include 49–50 (DS), D88, and K118. Residue E120 coordinates Mg(2+). Residue E186 is the Proton acceptor of the active site.

This sequence belongs to the PanB family. As to quaternary structure, homodecamer; pentamer of dimers. Mg(2+) is required as a cofactor.

It localises to the cytoplasm. It carries out the reaction 3-methyl-2-oxobutanoate + (6R)-5,10-methylene-5,6,7,8-tetrahydrofolate + H2O = 2-dehydropantoate + (6S)-5,6,7,8-tetrahydrofolate. The protein operates within cofactor biosynthesis; (R)-pantothenate biosynthesis; (R)-pantoate from 3-methyl-2-oxobutanoate: step 1/2. In terms of biological role, catalyzes the reversible reaction in which hydroxymethyl group from 5,10-methylenetetrahydrofolate is transferred onto alpha-ketoisovalerate to form ketopantoate. The sequence is that of 3-methyl-2-oxobutanoate hydroxymethyltransferase from Cereibacter sphaeroides (strain ATCC 17025 / ATH 2.4.3) (Rhodobacter sphaeroides).